Here is a 750-residue protein sequence, read N- to C-terminus: Photosystem I P700 chlorophyll a apoprotein A1 (750 aa).

The next 8 membrane-spanning stretches (helical) occupy residues valine 70–alanine 93, leucine 156–histidine 179, leucine 195–leucine 219, isoleucine 291–tyrosine 309, tryptophan 346–tyrosine 369, leucine 385–valine 411, alanine 433–histidine 455, and phenylalanine 531–leucine 549. Residues cysteine 573 and cysteine 582 each coordinate [4Fe-4S] cluster. The next 2 membrane-spanning stretches (helical) occupy residues histidine 589–tryptophan 610 and leucine 664–phenylalanine 686. Histidine 675 contacts chlorophyll a'. Methionine 683 and tyrosine 691 together coordinate chlorophyll a. Phylloquinone is bound at residue tryptophan 692. The helical transmembrane segment at alanine 724–alanine 744 threads the bilayer.

This sequence belongs to the PsaA/PsaB family. The PsaA/B heterodimer binds the P700 chlorophyll special pair and subsequent electron acceptors. PSI consists of a core antenna complex that captures photons, and an electron transfer chain that converts photonic excitation into a charge separation. The eukaryotic PSI reaction center is composed of at least 11 subunits. The cofactor is P700 is a chlorophyll a/chlorophyll a' dimer, A0 is one or more chlorophyll a, A1 is one or both phylloquinones and FX is a shared 4Fe-4S iron-sulfur center..

The protein resides in the plastid. It localises to the chloroplast thylakoid membrane. The enzyme catalyses reduced [plastocyanin] + hnu + oxidized [2Fe-2S]-[ferredoxin] = oxidized [plastocyanin] + reduced [2Fe-2S]-[ferredoxin]. Its function is as follows. PsaA and PsaB bind P700, the primary electron donor of photosystem I (PSI), as well as the electron acceptors A0, A1 and FX. PSI is a plastocyanin-ferredoxin oxidoreductase, converting photonic excitation into a charge separation, which transfers an electron from the donor P700 chlorophyll pair to the spectroscopically characterized acceptors A0, A1, FX, FA and FB in turn. Oxidized P700 is reduced on the lumenal side of the thylakoid membrane by plastocyanin. The chain is Photosystem I P700 chlorophyll a apoprotein A1 from Vitis vinifera (Grape).